Consider the following 136-residue polypeptide: ATP synthase epsilon chain (136 aa).

The protein belongs to the ATPase epsilon chain family. F-type ATPases have 2 components, CF(1) - the catalytic core - and CF(0) - the membrane proton channel. CF(1) has five subunits: alpha(3), beta(3), gamma(1), delta(1), epsilon(1). CF(0) has three main subunits: a, b and c.

The protein resides in the cell inner membrane. In terms of biological role, produces ATP from ADP in the presence of a proton gradient across the membrane. The polypeptide is ATP synthase epsilon chain (Persephonella marina (strain DSM 14350 / EX-H1)).